We begin with the raw amino-acid sequence, 1363 residues long: Clustered mitochondria protein homolog (1363 aa).

TPR repeat units follow at residues 29 to 63 (LPSF…IVLC) and 120 to 154 (KEKS…DIGS). Residues 172–191 (KEAKKEESTEKEQQEKEELS) are disordered. The stretch at 283-316 (STINFNPTIKINEKGKFNKSYLLYDLVCQLSPLF) is one TPR 3 repeat. In terms of domain architecture, Clu spans 361-631 (DLSRSQLSSL…RTTPRDIEFI (271 aa)). The interval 521–544 (PVITSPTTDAEGKNEAEEPESEPV) is disordered. Residues 548-581 (VYGLSSDGSRILEDKSFEEPLKQIGDFFHLKPHK) form a TPR 4 repeat. Residues 799-832 (AKAEKKREEEKEKEEKEATESEDKKEKKEDKEDA) are compositionally biased toward basic and acidic residues. The disordered stretch occupies residues 799 to 844 (AKAEKKREEEKEKEEKEATESEDKKEKKEDKEDAEKEEAEAEEEVP). The segment covering 833-842 (EKEEAEAEEE) has biased composition (acidic residues). 4 TPR repeats span residues 1057–1090 (VEEI…NESI), 1141–1174 (ITAY…WSLV), 1183–1216 (INTL…TKKL), and 1225–1258 (GFIY…FMKL). The tract at residues 1291–1363 (QQETQKKSKT…SGSKKSNKKK (73 aa)) is disordered. Positions 1330–1342 (PPQSNPEIANQSI) are enriched in polar residues.

This sequence belongs to the CLU family. As to quaternary structure, may associate with the eukaryotic translation initiation factor 3 (eIF-3) complex.

Its subcellular location is the cytoplasm. In terms of biological role, mRNA-binding protein involved in proper cytoplasmic distribution of mitochondria. This chain is Clustered mitochondria protein homolog, found in Candida albicans (strain SC5314 / ATCC MYA-2876) (Yeast).